The following is a 195-amino-acid chain: Phosphoheptose isomerase (195 aa).

The region spanning 36-195 (LAHCLLSDGK…DLVDHQLFGE (160 aa)) is the SIS domain. 51-53 (NGG) lines the substrate pocket. Residues His60 and Glu64 each coordinate Zn(2+). Substrate is bound by residues Glu64, 93–94 (ND), 119–121 (STS), Ser124, and Gln174. Positions 174 and 182 each coordinate Zn(2+).

The protein belongs to the SIS family. GmhA subfamily. As to quaternary structure, homotetramer. Requires Zn(2+) as cofactor.

The protein resides in the cytoplasm. The catalysed reaction is 2 D-sedoheptulose 7-phosphate = D-glycero-alpha-D-manno-heptose 7-phosphate + D-glycero-beta-D-manno-heptose 7-phosphate. The protein operates within carbohydrate biosynthesis; D-glycero-D-manno-heptose 7-phosphate biosynthesis; D-glycero-alpha-D-manno-heptose 7-phosphate and D-glycero-beta-D-manno-heptose 7-phosphate from sedoheptulose 7-phosphate: step 1/1. Functionally, catalyzes the isomerization of sedoheptulose 7-phosphate in D-glycero-D-manno-heptose 7-phosphate. This chain is Phosphoheptose isomerase, found in Methylococcus capsulatus (strain ATCC 33009 / NCIMB 11132 / Bath).